A 184-amino-acid polypeptide reads, in one-letter code: Adenine phosphoribosyltransferase (184 aa).

Belongs to the purine/pyrimidine phosphoribosyltransferase family. Homodimer.

The protein resides in the cytoplasm. The enzyme catalyses AMP + diphosphate = 5-phospho-alpha-D-ribose 1-diphosphate + adenine. The protein operates within purine metabolism; AMP biosynthesis via salvage pathway; AMP from adenine: step 1/1. Functionally, catalyzes a salvage reaction resulting in the formation of AMP, that is energically less costly than de novo synthesis. The polypeptide is Adenine phosphoribosyltransferase (Myxococcus xanthus (strain DK1622)).